We begin with the raw amino-acid sequence, 518 residues long: ATP synthase subunit beta 2 (518 aa).

154–161 contributes to the ATP binding site; that stretch reads GGAGVGKT. Residues 455–518 form a disordered region; that stretch reads IDEAKGKAKP…TDHAADTHES (64 aa). Composition is skewed to basic and acidic residues over residues 473–485 and 507–518; these read PDSKTEARADPKP and PETDHAADTHES.

The protein belongs to the ATPase alpha/beta chains family. In terms of assembly, F-type ATPases have 2 components, CF(1) - the catalytic core - and CF(0) - the membrane proton channel. CF(1) has five subunits: alpha(3), beta(3), gamma(1), delta(1), epsilon(1). CF(0) has three main subunits: a(1), b(2) and c(9-12). The alpha and beta chains form an alternating ring which encloses part of the gamma chain. CF(1) is attached to CF(0) by a central stalk formed by the gamma and epsilon chains, while a peripheral stalk is formed by the delta and b chains.

It localises to the cell inner membrane. It catalyses the reaction ATP + H2O + 4 H(+)(in) = ADP + phosphate + 5 H(+)(out). In terms of biological role, produces ATP from ADP in the presence of a proton gradient across the membrane. The catalytic sites are hosted primarily by the beta subunits. The chain is ATP synthase subunit beta 2 from Albidiferax ferrireducens (strain ATCC BAA-621 / DSM 15236 / T118) (Rhodoferax ferrireducens).